The primary structure comprises 250 residues: Anti-sigma-L factor RslA (250 aa).

The Cytoplasmic segment spans residues 1 to 115 (MTMPLRGLGP…VHRRRRRTRL (115 aa)). A helical transmembrane segment spans residues 116–136 (ITWVASSAAAAVLAIGVLVGV). The Extracellular portion of the chain corresponds to 137 to 250 (QGHSAAPQRA…TGQVLLQRSL (114 aa)).

Interacts with ECF RNA polymerase sigma factor SigL; this should inhibit the interaction of SigL with the RNA polymerase catalytic core. Post-translationally, probably cleaved within the membrane by Rip1 near the cytoplasmic membrane interface.

It is found in the cell membrane. In terms of biological role, an anti-sigma factor for extracytoplasmic function (ECF) sigma factor SigL. ECF sigma factors are held in an inactive form by an anti-sigma factor until released by regulated intramembrane proteolysis (RIP). RIP occurs when an extracytoplasmic signal triggers a concerted proteolytic cascade to transmit information and elicit cellular responses. The membrane-spanning regulatory substrate protein is first cut extracytoplasmically (site-1 protease, S1P), then within the membrane itself (site-2 protease, S2P, Rip1), while cytoplasmic proteases finish degrading the regulatory protein, liberating the sigma factor. In Mycobacterium tuberculosis (strain ATCC 35801 / TMC 107 / Erdman), this protein is Anti-sigma-L factor RslA (rslA).